Reading from the N-terminus, the 130-residue chain is Small ribosomal subunit protein uS9 (130 aa).

The protein belongs to the universal ribosomal protein uS9 family.

The sequence is that of Small ribosomal subunit protein uS9 from Pseudomonas fluorescens (strain ATCC BAA-477 / NRRL B-23932 / Pf-5).